We begin with the raw amino-acid sequence, 196 residues long: MSSPLRMDVTFLLAAIAVTWVCGLKIGFPGFSTPPRSFIQHPKRTLCPEDCDIASPFKCEESPTCLRLFQVCNGRWDCEHGSDEDNALCAAVLRPLECMIWEFLEGQRDWILPNLFNDANTDLVAHALHEAYSMGDLQSYLNLTDQNIENIRNSTRGAIVGDPRPLMALGMPDRAWPEVMYLLKELYNLGLDVWAE.

The N-terminal stretch at 1-25 is a signal peptide; it reads MSSPLRMDVTFLLAAIAVTWVCGLK. Residues 50-90 enclose the LDL-receptor class A domain; the sequence is DCDIASPFKCEESPTCLRLFQVCNGRWDCEHGSDEDNALCA. Cystine bridges form between Cys51-Cys65, Cys59-Cys78, and Cys72-Cys89.

Expressed by the venom duct.

The protein localises to the secreted. This Conus victoriae (Queen Victoria cone) protein is Neuropeptide prohormone-4.